Reading from the N-terminus, the 155-residue chain is 1,4-dihydroxy-2-naphthoyl-CoA hydrolase (155 aa).

Asp-22 is a catalytic residue.

It belongs to the 4-hydroxybenzoyl-CoA thioesterase family. DHNA-CoA hydrolase subfamily.

It carries out the reaction 1,4-dihydroxy-2-naphthoyl-CoA + H2O = 1,4-dihydroxy-2-naphthoate + CoA + H(+). Its pathway is cofactor biosynthesis; phylloquinone biosynthesis. It functions in the pathway quinol/quinone metabolism; 1,4-dihydroxy-2-naphthoate biosynthesis; 1,4-dihydroxy-2-naphthoate from chorismate: step 7/7. In terms of biological role, catalyzes the hydrolysis of 1,4-dihydroxy-2-naphthoyl-CoA (DHNA-CoA) to 1,4-dihydroxy-2-naphthoate (DHNA), a reaction involved in phylloquinone (vitamin K1) biosynthesis. This Prochlorococcus marinus (strain SARG / CCMP1375 / SS120) protein is 1,4-dihydroxy-2-naphthoyl-CoA hydrolase.